We begin with the raw amino-acid sequence, 161 residues long: uncharacterized protein (161 aa).

A compositionally biased stretch (low complexity) spans 1-16; sequence MPRAGRAPAEGGPAPG. 3 disordered regions span residues 1–23, 50–91, and 140–161; these read MPRA…SRCL, GRPV…TQSA, and RGPA…WRIS.

This is an uncharacterized protein from Homo sapiens (Human).